A 209-amino-acid polypeptide reads, in one-letter code: GELVGGEVKVGHNLEAILKGLDVDVYSVPSFIKLYDQVTAGIFLNNRTKRYWFDKNAESNCFMLYARDLLITWSQDKRYWRWNPFQEHGNTLEVAELIDVCWLNIVGNIETSVLSPGISYEAAFEVMLTNSASGWRIPVDVKLKMPDGSEQESQVNLQDKPRGVWFFISVGHFKISVGETIGNIEFSIVQHQEAKRGLLVKGLVIQPKQ.

In terms of assembly, homodimer; non-covalently linked.

In terms of biological role, binds chito-oligosaccherides. Has hemagglutinating activity towards rabbit erythrocytes. The protein is Lectin of Luffa acutangula (Ridged gourd).